The sequence spans 1671 residues: MVIQGKRLAASSIQLLASSLDAKKLCYEYDERQAPGVTQITEEAPTEQPPLSTPPSLPQTPNISPISASKIVIDDVALSRVQIVQALVARKLKTAIAQLPTSKSIKELSGGRSSLQNELVGDIHNEFSSIPDAPEQILLRDFGDANPTVQLGKTSSAAVAKLISSKMPSDFNANAIRAHLANKWGLGPLRQTAVLLYAIASEPPSRLASSSAAEEYWDNVSSMYAESCGITLRPRQDTMNEDAMASSAIDPAVVAEFSKGHRRLGVQQFQALAEYLQIDLSGSQASQSDALVAELQQKVDLWTAEMTPEFLAGISPMLDVKKSRRYGSWWNMARQDVLAFYRRPSYSEFVDDALAFKVFLNRLCNRADEALLNMVRSLSCDAYFKQGSLPGYHAASRLLEQAITSTVADCPKARLILPAVGPHTTITKDGTIEYAEAPRQGVSGPTAYIQSLRQGASFIGLKSADVDTQSNLTDALLDAMCLALHNGISFVGKTFLVTGAGQGSIGAGVVRLLLEGGARVLVTTSREPATTSRYFQQMYDNHGAKFSELRVVPCNLASAQDCEGLIRHVYDPRGLNWDLDAILPFAAASDYSTEMHDIRGQSELGHRLMLVNVFRVLGHIVHCKRDAGVDCHPTQVLLPLSPNHGIFGGDGMYPESKLALESLFHRIRSESWSDQLSICGVRIGWTRSTGLMTAHDIIAETVEEHGIRTFSVAEMALNIAMLLTPDFVAHCEDGPLDADFTGSLGTLGSIPGFLAQLHQKVQLAAEVIRAVQAEDEHERFLSPGTKPTLQAPVAPMHPRSSLRVGYPRLPDYEQEIRPLSPRLERLQDPANAVVVVGYSELGPWGSARLRWEIESQGQWTSAGYVELAWLMNLIRHVNDESYVGWVDTQTGKPVRDGEIQALYGDHIDNHTGIRPIQSTSYNPERMEVLQEVAVEEDLPEFEVSQLTADAMRLRHGANVSIRPSGNPDACHVKLKRGAVILVPKTVPFVWGSCAGELPKGWTPAKYGIPENLIHQVDPVTLYTICCVAEAFYSAGITHPLEVFRHIHLSELGNFIGSSMGGPTKTRQLYRDVYFDHEIPSDVLQDTYLNTPAAWVNMLLLGCTGPIKTPVGACATGVESIDSGYESIMAGKTKMCLVGGYDDLQEEASYGFAQLKATVNVEEEIACGRQPSEMSRPMAESRAGFVEAHGCGVQLLCRGDIALQMGLPIYAVIASSAMAADKIGSSVPAPGQGILSFSRERARSSMISVTSRPSSRSSTSSEVSDKSSLTSITSISNPAPRAQRARSTTDMAPLRAALATWGLTIDDLDVASLHGTSTRGNDLNEPEVIETQMRHLGRTPGRPLWAICQKSVTGHPKAPAAAWMLNGCLQVLDSGLVPGNRNLDTLDEALRSASHLCFPTRTVQLREVKAFLLTSFGFGQKGGQVVGVAPKYFFATLPRPEVEGYYRKVRVRTEAGDRAYAAAVMSQAVVKIQTQNPYDEPDAPRIFLDPLARISQDPSTGQYRFRSDATPALDDDALPPPGEPTELVKGISSAWIEEKVRPHMSPGGTVGVDLVPLASFDAYKNAIFVERNYTVRERDWAEKSADVRAAYASRWCAKEAVFKCLQTHSQGAGAAMKEIEIEHGGNGAPKVKLRGAAQTAARQRGLEGVQLSISYGDDAVIAVALGLMSGAS.

The tract at residues 40-60 is disordered; it reads ITEEAPTEQPPLSTPPSLPQT. The span at 47 to 58 shows a compositional bias: pro residues; it reads EQPPLSTPPSLP. Residues 75–153 enclose the Carrier domain; sequence DVALSRVQIV…DANPTVQLGK (79 aa). An O-(pantetheine 4'-phosphoryl)serine modification is found at S113. The ketoreductase (KR) domain stretch occupies residues 492-729; that stretch reads GKTFLVTGAG…AMLLTPDFVA (238 aa). The 503-residue stretch at 926-1428 folds into the Ketosynthase family 3 (KS3) domain; that stretch reads MEVLQEVAVE…QKGGQVVGVA (503 aa). Catalysis depends on C1113, which acts as the For beta-ketoacyl synthase activity. Residues 1244 to 1270 show a composition bias toward low complexity; that stretch reads SMISVTSRPSSRSSTSSEVSDKSSLTS. The tract at residues 1244–1288 is disordered; sequence SMISVTSRPSSRSSTSSEVSDKSSLTSITSISNPAPRAQRARSTT. Catalysis depends on for beta-ketoacyl synthase activity residues H1313 and H1354. The segment at 1497 to 1521 is disordered; it reads PSTGQYRFRSDATPALDDDALPPPG. D1552 is a Mg(2+) binding site. Acetyl-CoA contacts are provided by residues 1552 to 1554, 1598 to 1608, 1622 to 1625, and 1652 to 1654; these read DLV, EAVFKCLQTHS, HGGN, and ISY. S1653 provides a ligand contact to Mg(2+).

Belongs to the thiolase-like superfamily. Fungal fatty acid synthetase subunit alpha family. In terms of assembly, [Alpha(6)beta(6)] hexamers of two multifunctional subunits (alpha and beta). In terms of processing, 4'-phosphopantetheine is transferred from CoA to a specific serine of the acyl carrier domain by the C-terminal PPT domain. This modification is essential for activity because fatty acids are bound in thioester linkage to the sulfhydryl of the prosthetic group.

The enzyme catalyses acetyl-CoA + n malonyl-CoA + 2n NADPH + 4n H(+) = a long-chain-acyl-CoA + n CoA + n CO2 + 2n NADP(+).. It catalyses the reaction a fatty acyl-[ACP] + malonyl-[ACP] + H(+) = a 3-oxoacyl-[ACP] + holo-[ACP] + CO2. It carries out the reaction a (3R)-hydroxyacyl-[ACP] + NADP(+) = a 3-oxoacyl-[ACP] + NADPH + H(+). Its pathway is mycotoxin biosynthesis; aflatoxin biosynthesis. Fatty acid synthase alpha subunit; part of the gene cluster that mediates the biosynthesis of aflatoxins, a group of polyketide-derived furanocoumarins, and part of the most toxic and carcinogenic compounds among the known mycotoxins. The four major aflatoxins produced by A.parasiticus are aflatoxin B1 (AFB1), aflatoxin B2 (AFB2), aflatoxin G1 (AFG1) and aflatoxin G2 (AFG2). Within the aflatoxin pathway, the fungal fatty acid synthase aflA/aflB provides the hexanoyl starter unit to the acyl-carrier protein (ACP) domain of the norsolorinic acid synthase to allow the first step of the pathway. The biosynthesis of aflatoxins begins with the norsolorinic acid synthase aflC that combines a hexanoyl starter unit produced by the fatty acid synthase aflA/aflB and 7 malonyl-CoA extender units to synthesize the precursor NOR. The second step is the conversion of NOR to averantin (AVN) and requires the norsolorinic acid ketoreductase aflD, which catalyzes the dehydration of norsolorinic acid to form (1'S)-averantin. The norsolorinic acid reductases aflE and aflF may also play a role in the conversion of NOR to AVN. The cytochrome P450 monooxygenase aflG then catalyzes the hydroxylation of AVN to 5'hydroxyaverantin (HAVN). The next step is performed by the 5'-hydroxyaverantin dehydrogenase aflH that transforms HAVN to 5'-oxoaverantin (OAVN) which is further converted to averufin (AVF) by aflK that plays a dual role in the pathway, as a 5'-oxoaverantin cyclase that mediates conversion of 5'-oxoaverantin, as well as a versicolorin B synthase in a later step in the pathway. The averufin oxidase aflI catalyzes the conversion of AVF to versiconal hemiacetal acetate (VHA). VHA is then the substrate for the versiconal hemiacetal acetate esterase aflJ to yield versiconal (VAL). Versicolorin B synthase aflK then converts VAL to versicolorin B (VERB) by closing the bisfuran ring of aflatoxin which is required for DNA-binding, thus giving to aflatoxin its activity as a mutagen. Then, the activity of the versicolorin B desaturase aflL leads to versicolorin A (VERA). A branch point starts from VERB since it can also be converted to dihydrodemethylsterigmatocystin (DMDHST), probably also by aflL, VERA being a precursor for aflatoxins B1 and G1, and DMDHST for aflatoxins B2 and G2. Next, the versicolorin reductase aflM and the cytochrome P450 monooxygenase aflN are involved in conversion of VERA to demethylsterigmatocystin (DMST). AflX and aflY seem also involved in this step, through probable aflX-mediated epoxide ring-opening step following versicolorin A oxidation and aflY-mediated Baeyer-Villiger oxidation required for the formation of the xanthone ring. The methyltransferase aflO then leads to the modification of DMST to sterigmatocystin (ST), and of DMDHST to dihydrosterigmatocystin (DHST). Both ST and DHST are then substrates of the O-methyltransferase aflP to yield O-methylsterigmatocystin (OMST) and dihydro-O-methylsterigmatocystin (DHOMST), respectively. Finally OMST is converted to aflatoxins B1 and G1, and DHOMST to aflatoxins B2 and G2, via the action of several enzymes including O-methylsterigmatocystin oxidoreductase aflQ, the cytochrome P450 monooxygenase aflU, but also the NADH-dependent flavin oxidoreductase nadA which is specifically required for the synthesis of AFG1. This Aspergillus parasiticus (strain ATCC 56775 / NRRL 5862 / SRRC 143 / SU-1) protein is Fatty acid synthase alpha subunit aflA.